The chain runs to 112 residues: Inner membrane assembly complex subunit 17 (112 aa).

The N-terminal 24 residues, 1–24 (MLRKLPINFAKWTVKKVPVQQKRF), are a transit peptide targeting the mitochondrion. Residues 25-44 (NSQQKEISPHIMFYKNYARP) are Mitochondrial matrix-facing. A helical membrane pass occupies residues 45–62 (LGKVTLFALATYYGLEIV). Topologically, residues 63 to 112 (WWKLDASEQEAIKNSKLLICESSFSLLTFRRITEFRECEIKTRDLYDPEI) are mitochondrial intermembrane.

Belongs to the INA17 family. In terms of assembly, component of the inner membrane assembly (INA) complex. Interacts with a subset of F(1)F(0)-ATP synthase subunits of the F(1)-domain and the peripheral stalk.

It localises to the mitochondrion inner membrane. In terms of biological role, component of the INA complex (INAC) that promotes the biogenesis of mitochondrial F(1)F(0)-ATP synthase. INAC facilitates the assembly of the peripheral stalk and promotes the assembly of the catalytic F(1)-domain with the membrane-embedded F(0)-domain. This Schizosaccharomyces pombe (strain 972 / ATCC 24843) (Fission yeast) protein is Inner membrane assembly complex subunit 17.